The primary structure comprises 725 residues: Methionine--tRNA ligase (725 aa).

The 'HIGH' region signature appears at 27-37; the sequence is PYANGQIHIGH. C158, C161, C171, and C174 together coordinate Zn(2+). The short motif at 348–352 is the 'KMSKS' region element; it reads KMSKS. K351 contributes to the ATP binding site. The region spanning 619-725 is the tRNA-binding domain; that stretch reads DFAKIDLRIA…SGAKPGMRVK (107 aa).

Belongs to the class-I aminoacyl-tRNA synthetase family. MetG type 1 subfamily. Homodimer. The cofactor is Zn(2+).

It is found in the cytoplasm. The enzyme catalyses tRNA(Met) + L-methionine + ATP = L-methionyl-tRNA(Met) + AMP + diphosphate. Its function is as follows. Is required not only for elongation of protein synthesis but also for the initiation of all mRNA translation through initiator tRNA(fMet) aminoacylation. This Burkholderia pseudomallei (strain 1106a) protein is Methionine--tRNA ligase.